Consider the following 68-residue polypeptide: ATP synthase subunit c (68 aa).

A run of 2 helical transmembrane segments spans residues 4-24 (IAAA…NGLI) and 45-65 (IMFI…VIAF).

Belongs to the ATPase C chain family. As to quaternary structure, F-type ATPases have 2 components, F(1) - the catalytic core - and F(0) - the membrane proton channel. F(1) has five subunits: alpha(3), beta(3), gamma(1), delta(1), epsilon(1). F(0) has three main subunits: a(1), b(2) and c(10-14). The alpha and beta chains form an alternating ring which encloses part of the gamma chain. F(1) is attached to F(0) by a central stalk formed by the gamma and epsilon chains, while a peripheral stalk is formed by the delta and b chains.

The protein resides in the cell membrane. In terms of biological role, f(1)F(0) ATP synthase produces ATP from ADP in the presence of a proton or sodium gradient. F-type ATPases consist of two structural domains, F(1) containing the extramembraneous catalytic core and F(0) containing the membrane proton channel, linked together by a central stalk and a peripheral stalk. During catalysis, ATP synthesis in the catalytic domain of F(1) is coupled via a rotary mechanism of the central stalk subunits to proton translocation. Key component of the F(0) channel; it plays a direct role in translocation across the membrane. A homomeric c-ring of between 10-14 subunits forms the central stalk rotor element with the F(1) delta and epsilon subunits. In Staphylococcus saprophyticus subsp. saprophyticus (strain ATCC 15305 / DSM 20229 / NCIMB 8711 / NCTC 7292 / S-41), this protein is ATP synthase subunit c.